We begin with the raw amino-acid sequence, 268 residues long: 4-diphosphocytidyl-2-C-methyl-D-erythritol kinase (268 aa).

The active site involves lysine 9. An ATP-binding site is contributed by 88 to 98; sequence PPGAGLGGGSS. Aspartate 130 is an active-site residue.

Belongs to the GHMP kinase family. IspE subfamily.

The catalysed reaction is 4-CDP-2-C-methyl-D-erythritol + ATP = 4-CDP-2-C-methyl-D-erythritol 2-phosphate + ADP + H(+). The protein operates within isoprenoid biosynthesis; isopentenyl diphosphate biosynthesis via DXP pathway; isopentenyl diphosphate from 1-deoxy-D-xylulose 5-phosphate: step 3/6. Functionally, catalyzes the phosphorylation of the position 2 hydroxy group of 4-diphosphocytidyl-2C-methyl-D-erythritol. The polypeptide is 4-diphosphocytidyl-2-C-methyl-D-erythritol kinase (Aquifex aeolicus (strain VF5)).